Here is a 502-residue protein sequence, read N- to C-terminus: Adenylate cyclase (502 aa).

The Cytoplasmic segment spans residues 1–25 (MGDFCRRVDCKAMKFFALRSSIRTQ). A helical transmembrane segment spans residues 26–46 (IMASTTLLILALIGAIVTVWA). The Lumenal, thylakoid portion of the chain corresponds to 47 to 203 (KSESTLYHQE…RKVNLAVTNA (157 aa)). A helical membrane pass occupies residues 204 to 226 (VNQALVVGFAGLNIGWICAYFLA). The 54-residue stretch at 227–280 (QHLSDPVRRLQISVAKIAGGDLQHRADIHSRADEIGALATSVNEMSAALQISFN) folds into the HAMP domain. Over 227 to 502 (QHLSDPVRRL…EAISIYEVKA (276 aa)) the chain is Cytoplasmic. The Guanylate cyclase domain occupies 320–451 (TILFCDIRGY…DAVNVASRIE (132 aa)). Positions 325 and 369 each coordinate Mg(2+).

The protein belongs to the adenylyl cyclase class-3 family. It depends on Mg(2+) as a cofactor.

It localises to the cellular thylakoid membrane. The enzyme catalyses ATP = 3',5'-cyclic AMP + diphosphate. Its function is as follows. May function as a membrane-localized receptor protein. This Anabaena cylindrica protein is Adenylate cyclase (cya).